A 115-amino-acid polypeptide reads, in one-letter code: Putative ethidium bromide resistance protein (115 aa).

Transmembrane regions (helical) follow at residues 4–21 (WLFLVIAIVGEVIATSAL), 30–47 (LAPSAVVIIGYGIAFYFL), 58–79 (VAYAVWSGLGVVIITAIAWLLH), and 85–104 (AWGFVGMGLIIAAFLLARSP).

Belongs to the drug/metabolite transporter (DMT) superfamily. Small multidrug resistance (SMR) (TC 2.A.7.1) family.

The protein localises to the cell membrane. Functionally, one of the determinants for resistance to ethidium bromide and quaternary ammonium compounds. The protein is Putative ethidium bromide resistance protein (ebr) of Escherichia coli.